The sequence spans 253 residues: Ubiquinone biosynthesis O-methyltransferase (253 aa).

The S-adenosyl-L-methionine site is built by Arg41, Gly72, Asp93, and Met136.

This sequence belongs to the methyltransferase superfamily. UbiG/COQ3 family.

It catalyses the reaction a 3-demethylubiquinol + S-adenosyl-L-methionine = a ubiquinol + S-adenosyl-L-homocysteine + H(+). The catalysed reaction is a 3-(all-trans-polyprenyl)benzene-1,2-diol + S-adenosyl-L-methionine = a 2-methoxy-6-(all-trans-polyprenyl)phenol + S-adenosyl-L-homocysteine + H(+). It participates in cofactor biosynthesis; ubiquinone biosynthesis. Its function is as follows. O-methyltransferase that catalyzes the 2 O-methylation steps in the ubiquinone biosynthetic pathway. This Chelativorans sp. (strain BNC1) protein is Ubiquinone biosynthesis O-methyltransferase.